Reading from the N-terminus, the 342-residue chain is Growth hormone-regulated TBC protein 1 (342 aa).

In terms of domain architecture, Rab-GAP TBC spans 72–263; sequence GIPNEHRSHV…RIWDCLFFEG (192 aa).

In terms of biological role, may act as a GTPase-activating protein for Rab family protein(s). This is Growth hormone-regulated TBC protein 1 (grtp1) from Xenopus laevis (African clawed frog).